The primary structure comprises 474 residues: tRNA-2-methylthio-N(6)-dimethylallyladenosine synthase (474 aa).

An MTTase N-terminal domain is found at 3–120 (KKLLIKTWGC…LPEMIKQSQT (118 aa)). Cys-12, Cys-49, Cys-83, Cys-157, Cys-161, and Cys-164 together coordinate [4Fe-4S] cluster. The region spanning 143–375 (RAEGATAFVS…QQTINAQAMR (233 aa)) is the Radical SAM core domain. In terms of domain architecture, TRAM spans 378-441 (RLMLATEQRV…ANSLRGELVR (64 aa)).

It belongs to the methylthiotransferase family. MiaB subfamily. As to quaternary structure, monomer. [4Fe-4S] cluster serves as cofactor.

It is found in the cytoplasm. It catalyses the reaction N(6)-dimethylallyladenosine(37) in tRNA + (sulfur carrier)-SH + AH2 + 2 S-adenosyl-L-methionine = 2-methylsulfanyl-N(6)-dimethylallyladenosine(37) in tRNA + (sulfur carrier)-H + 5'-deoxyadenosine + L-methionine + A + S-adenosyl-L-homocysteine + 2 H(+). In terms of biological role, catalyzes the methylthiolation of N6-(dimethylallyl)adenosine (i(6)A), leading to the formation of 2-methylthio-N6-(dimethylallyl)adenosine (ms(2)i(6)A) at position 37 in tRNAs that read codons beginning with uridine. In Vibrio parahaemolyticus serotype O3:K6 (strain RIMD 2210633), this protein is tRNA-2-methylthio-N(6)-dimethylallyladenosine synthase.